Reading from the N-terminus, the 101-residue chain is Co-chaperonin GroES (101 aa).

It belongs to the GroES chaperonin family. As to quaternary structure, heptamer of 7 subunits arranged in a ring. Interacts with the chaperonin GroEL.

It localises to the cytoplasm. Together with the chaperonin GroEL, plays an essential role in assisting protein folding. The GroEL-GroES system forms a nano-cage that allows encapsulation of the non-native substrate proteins and provides a physical environment optimized to promote and accelerate protein folding. GroES binds to the apical surface of the GroEL ring, thereby capping the opening of the GroEL channel. This is Co-chaperonin GroES from Lawsonia intracellularis.